The sequence spans 1905 residues: Low-density lipoprotein receptor-related protein 4 (1905 aa).

The first 20 residues, 1-20 (MRRWWGALLLGALLCAHGTA), serve as a signal peptide directing secretion. The Extracellular portion of the chain corresponds to 21–1723 (SNLECACGRS…VPAAPGEGLH (1703 aa)). LDL-receptor class A domains are found at residues 26–67 (ACGR…DGCT), 70–106 (TCSP…QDCP), 109–144 (ECEE…EQCD), 147–183 (KCSD…ESCP), 190–226 (PCNL…SDCS), 230–266 (PCRS…RNCT), 269–305 (MCTA…ENCE), and 311–350 (QCAS…QNCR). 30 cysteine pairs are disulfide-bonded: cysteine 27–cysteine 44, cysteine 34–cysteine 57, cysteine 51–cysteine 66, cysteine 71–cysteine 83, cysteine 78–cysteine 96, cysteine 90–cysteine 105, cysteine 110–cysteine 122, cysteine 117–cysteine 135, cysteine 129–cysteine 143, cysteine 148–cysteine 160, cysteine 155–cysteine 173, cysteine 167–cysteine 182, cysteine 191–cysteine 203, cysteine 198–cysteine 216, cysteine 210–cysteine 225, cysteine 231–cysteine 243, cysteine 238–cysteine 256, cysteine 250–cysteine 265, cysteine 270–cysteine 282, cysteine 277–cysteine 295, cysteine 289–cysteine 304, cysteine 312–cysteine 324, cysteine 319–cysteine 337, cysteine 331–cysteine 349, cysteine 358–cysteine 369, cysteine 365–cysteine 378, cysteine 380–cysteine 393, cysteine 399–cysteine 409, cysteine 405–cysteine 418, and cysteine 420–cysteine 433. Asparagine 264 is a glycosylation site (N-linked (GlcNAc...) asparagine). Residues 354 to 394 (GEENCNVNNGGCAQKCQMIRGAVQCTCHTGYRLTEDGRTCQ) form the EGF-like 1; atypical domain. The EGF-like 2; calcium-binding domain occupies 395–434 (DVNECAEEGYCSQGCTNSEGAFQCWCEAGYELRPDRRSCK). LDL-receptor class B repeat units lie at residues 480–522 (ELVF…DWVH), 523–565 (DKLY…HPME), 566–609 (GTIY…DYAG), 610–652 (RRMY…FEDS), and 653–693 (LYWT…LHPQ). N-linked (GlcNAc...) asparagine glycosylation occurs at asparagine 498. One can recognise an EGF-like 3 domain in the interval 698–737 (GKNRCGDNNGGCTHLCLPSGQNYTCACPTGFRKINSHACA). 3 cysteine pairs are disulfide-bonded: cysteine 702-cysteine 713, cysteine 709-cysteine 722, and cysteine 724-cysteine 736. Asparagine 719 is a glycosylation site (N-linked (GlcNAc...) asparagine). 5 LDL-receptor class B repeats span residues 785 to 827 (DHVY…DWVT), 828 to 870 (NKLY…EPMG), 871 to 914 (GYMY…DYGS), 915 to 956 (QRLY…LYGQ), and 957 to 998 (RIYW…FHRQ). N-linked (GlcNAc...) asparagine glycosylation occurs at asparagine 901. The N-linked (GlcNAc...) asparagine glycan is linked to asparagine 1077. LDL-receptor class B repeat units lie at residues 1093–1135 (GKVY…DAIG), 1136–1178 (RKVY…YHEM), 1179–1222 (GFMY…DKTS), 1223–1263 (SQLL…LLDS), 1264–1306 (YIYW…DRAQ), 1397–1439 (GKVY…DWVA), 1440–1482 (RNLY…FPRK), 1483–1526 (GYLF…DYDT), 1527–1568 (RRIY…QDRW), and 1569–1610 (IYWT…SPQR). 2 N-linked (GlcNAc...) asparagine glycosylation sites follow: asparagine 1415 and asparagine 1467. The tract at residues 1659-1696 (PRATSLNEKSPVLPNTLPTTLHSSTTRTRTSPEGAEGR) is disordered. Over residues 1671 to 1690 (LPNTLPTTLHSSTTRTRTSP) the composition is skewed to low complexity. Residues 1724–1746 (VSYAVGGLLSVLLILLVTAALML) form a helical membrane-spanning segment. Topologically, residues 1747–1905 (YRHRKSKFTD…ERKLSSESQV (159 aa)) are cytoplasmic. Positions 1853–1905 (SSGSLDDTETEQLLQEEQSECSSVHTATTPERRGSLPDTGWKHERKLSSESQV) are disordered. A compositionally biased stretch (polar residues) spans 1872–1881 (ECSSVHTATT). A compositionally biased stretch (basic and acidic residues) spans 1882 to 1905 (PERRGSLPDTGWKHERKLSSESQV).

Belongs to the LDLR family. As to quaternary structure, homooligomer. Interacts with MUSK; the heterodimer forms an AGRIN receptor complex that binds AGRIN resulting in activation of MUSK. Interacts (via the extracellular domain) with SOST; the interaction facilitates the inhibition of Wnt signaling. Interacts with MESD; the interaction promotes glycosylation of LRP4 and its cell-surface expression. N-glycosylation is required for cell surface location. Expressed in different regions of the brain, mainly in the olfactory bulb, at lower level in the cerebral cortex and hippocampus.

The protein localises to the cell membrane. Its function is as follows. Mediates SOST-dependent inhibition of bone formation. Functions as a specific facilitator of SOST-mediated inhibition of Wnt signaling. Plays a key role in the formation and the maintenance of the neuromuscular junction (NMJ), the synapse between motor neuron and skeletal muscle. Directly binds AGRIN and recruits it to the MUSK signaling complex. Mediates the AGRIN-induced phosphorylation of MUSK, the kinase of the complex. The activation of MUSK in myotubes induces the formation of NMJ by regulating different processes including the transcription of specific genes and the clustering of AChR in the postsynaptic membrane. Alternatively, may be involved in the negative regulation of the canonical Wnt signaling pathway, being able to antagonize the LRP6-mediated activation of this pathway. More generally, has been proposed to function as a cell surface endocytic receptor binding and internalizing extracellular ligands for degradation by lysosomes. Plays an essential role in the process of digit differentiation. In Rattus norvegicus (Rat), this protein is Low-density lipoprotein receptor-related protein 4 (Lrp4).